The sequence spans 969 residues: Leucine--tRNA ligase (969 aa).

The disordered stretch occupies residues 1 to 23; the sequence is MTESPTTSPATGSGAAAPDSDAP. Residues 78–89 carry the 'HIGH' region motif; the sequence is PYPSGEGLHVGH. A 'KMSKS' region motif is present at residues 737-741; it reads KIGKS. Lys-740 provides a ligand contact to ATP.

It belongs to the class-I aminoacyl-tRNA synthetase family.

The protein resides in the cytoplasm. The catalysed reaction is tRNA(Leu) + L-leucine + ATP = L-leucyl-tRNA(Leu) + AMP + diphosphate. This is Leucine--tRNA ligase from Mycobacterium avium (strain 104).